The following is a 340-amino-acid chain: MIKVGIIGSTGYTGLELIRLLHNHPNAKIIALCSRINASKSVIKEFPSLISYIDLDFVTPNEKKLFECDIIFFATPHGVAMNSVSKFLNKDIKIIDLGADFRIKDSTEWSKWYGMTHTQGDLLKDAVYGLPEVYNSQIKNATLIANPGCYPTAIILALKPLLETNIIDTKSIIADCKSGVSGAGRSANIATLFCEVNESLKPYNVDQHRHKPETQQVLTDIAGKEVNFFFTPHLVPMTRGMLASIYVDLIKDINVQKLFEKHYQNNKFIHILPTNVYPQTKSVKGTNNCHIGIQKSNNKLIIMSVIDNIIKGASGQAIQNMNLMFGLDEGLGLEQIGLLP.

Cysteine 149 is a catalytic residue.

The protein belongs to the NAGSA dehydrogenase family. Type 1 subfamily.

The protein localises to the cytoplasm. It catalyses the reaction N-acetyl-L-glutamate 5-semialdehyde + phosphate + NADP(+) = N-acetyl-L-glutamyl 5-phosphate + NADPH + H(+). Its pathway is amino-acid biosynthesis; L-arginine biosynthesis; N(2)-acetyl-L-ornithine from L-glutamate: step 3/4. In terms of biological role, catalyzes the NADPH-dependent reduction of N-acetyl-5-glutamyl phosphate to yield N-acetyl-L-glutamate 5-semialdehyde. The polypeptide is N-acetyl-gamma-glutamyl-phosphate reductase (Vesicomyosocius okutanii subsp. Calyptogena okutanii (strain HA)).